The primary structure comprises 381 residues: Homoserine O-succinyltransferase (381 aa).

One can recognise an AB hydrolase-1 domain in the interval 45–360 (NAVLVCHALN…PHGHDAFLLD (316 aa)). Catalysis depends on serine 151, which acts as the Nucleophile. Arginine 221 contacts substrate. Residues aspartate 321 and histidine 354 contribute to the active site. Aspartate 355 contacts substrate.

It belongs to the AB hydrolase superfamily. MetX family. In terms of assembly, homodimer.

The protein localises to the cytoplasm. The enzyme catalyses L-homoserine + succinyl-CoA = O-succinyl-L-homoserine + CoA. It functions in the pathway amino-acid biosynthesis; L-methionine biosynthesis via de novo pathway; O-succinyl-L-homoserine from L-homoserine: step 1/1. Functionally, transfers a succinyl group from succinyl-CoA to L-homoserine, forming succinyl-L-homoserine. The protein is Homoserine O-succinyltransferase of Paraburkholderia phymatum (strain DSM 17167 / CIP 108236 / LMG 21445 / STM815) (Burkholderia phymatum).